The primary structure comprises 207 residues: Large ribosomal subunit protein uL4 (207 aa).

The tract at residues 50–76 (AVKNRSAVSGGGRKPWKQKGTGRARQG) is disordered.

Belongs to the universal ribosomal protein uL4 family. Part of the 50S ribosomal subunit.

In terms of biological role, one of the primary rRNA binding proteins, this protein initially binds near the 5'-end of the 23S rRNA. It is important during the early stages of 50S assembly. It makes multiple contacts with different domains of the 23S rRNA in the assembled 50S subunit and ribosome. Its function is as follows. Forms part of the polypeptide exit tunnel. The sequence is that of Large ribosomal subunit protein uL4 from Staphylococcus aureus (strain MRSA252).